Reading from the N-terminus, the 858-residue chain is Elongation factor 2 (858 aa).

The tr-type G domain occupies 17–362 (ANIRNMSVIA…MITIHLPSPV (346 aa)). 26–33 (AHVDHGKS) serves as a coordination point for GTP. Threonine 54 bears the Phosphothreonine mark. Threonine 57 is subject to Phosphothreonine; by EEF2K. Threonine 59 is subject to Phosphothreonine. An N6-succinyllysine modification is found at lysine 152. Residues 158-161 (NKMD) and 216-218 (SGL) contribute to the GTP site. Lysine 235 bears the N6-acetyllysine mark. Lysine 239 is subject to N6-acetyllysine; alternate. Lysine 239 participates in a covalent cross-link: Glycyl lysine isopeptide (Lys-Gly) (interchain with G-Cter in SUMO1); alternate. Phosphotyrosine; by CSK is present on tyrosine 265. N6-acetyllysine; alternate is present on lysine 272. Lysine 272 carries the N6-succinyllysine; alternate modification. Lysine 275 is modified (N6-acetyllysine). A Glycyl lysine isopeptide (Lys-Gly) (interchain with G-Cter in SUMO) cross-link involves residue lysine 322. Position 325 is a phosphoserine (serine 325). Phosphotyrosine; by CSK is present on tyrosine 373. Threonine 435 is subject to Phosphothreonine. An N6-acetyllysine mark is found at lysine 439 and lysine 445. Phosphoserine is present on serine 502. Lysine 525 is modified (N6,N6,N6-trimethyllysine; by EEF2KMT). Lysine 529 is covalently cross-linked (Glycyl lysine isopeptide (Lys-Gly) (interchain with G-Cter in SUMO)). Residue lysine 572 is modified to N6-succinyllysine. Position 595 is a phosphoserine; by CDK2 (serine 595). The residue at position 619 (lysine 619) is an N6-acetyllysine. Histidine 715 is subject to Diphthamide.

It belongs to the TRAFAC class translation factor GTPase superfamily. Classic translation factor GTPase family. EF-G/EF-2 subfamily. Binds to 80S ribosomes. Actively translating ribosomes show mutually exclusive binding of eIF5a (EIF5A or EIF5A2) and EEF2/eEF2. Interacts with SERBP1; interaction sequesters EEF2/eEF2 at the A-site of the ribosome, thereby blocking the interaction sites of the mRNA-tRNA complex, promoting ribosome stabilization and hibernation. Interacts with HABP4; interaction takes place at the A-site of hibernating ribosomes and promotes ribosome stabilization. Component of the mRNA surveillance SURF complex, at least composed of ERF1, ERF3 (ERF3A or ERF3B), EEF2, UPF1/RENT1, SMG1, SMG8 and SMG9. Interacts with RBPMS2. Diphthamide is 2-[3-carboxyamido-3-(trimethyl-ammonio)propyl]histidine. Post-translationally, phosphorylation by EF-2 kinase completely inactivates EF-2; it requires prior phosphorylation by CDK2 at Ser-595 during mitotic prometaphase. Phosphorylation by CSK promotes SUMOylation, proteolytic cleavage, and nuclear translocation if the C-terminal fragment. In terms of processing, proteolytically processed at two sites following phosphorylation by CSK. SUMOylated following phosphorylation by CSK, promotes proteolytic cleavage. Post-translationally, ISGylated.

It is found in the cytoplasm. It localises to the nucleus. The enzyme catalyses GTP + H2O = GDP + phosphate + H(+). Catalyzes the GTP-dependent ribosomal translocation step during translation elongation. During this step, the ribosome changes from the pre-translocational (PRE) to the post-translocational (POST) state as the newly formed A-site-bound peptidyl-tRNA and P-site-bound deacylated tRNA move to the P and E sites, respectively. Catalyzes the coordinated movement of the two tRNA molecules, the mRNA and conformational changes in the ribosome. The polypeptide is Elongation factor 2 (Eef2) (Rattus norvegicus (Rat)).